Consider the following 662-residue polypeptide: Glutathione hydrolase 7 (662 aa).

Residues 1–106 (MAAENEASQE…ASECSCRQDG (106 aa)) lie on the Cytoplasmic side of the membrane. Phosphoserine is present on residues Ser17, Ser72, Ser79, and Ser83. Positions 26–90 (SFPRLPEDEP…DGSPLRETRK (65 aa)) are disordered. Over residues 72–83 (SSSSEMGSQDGS) the composition is skewed to low complexity. The chain crosses the membrane as a helical; Signal-anchor for type II membrane protein span at residues 107 to 127 (LTVIVTACLTFATGVTVALIM). The Extracellular segment spans residues 128–662 (QIYFGDPQIF…SPDAAGATIL (535 aa)). N-linked (GlcNAc...) asparagine glycans are attached at residues Asn198, Asn267, Asn283, Asn330, Asn353, Asn394, Asn452, Asn519, and Asn586.

It belongs to the gamma-glutamyltransferase family. In terms of assembly, heterodimer composed of the light and heavy chains. The active site is located in the light chain. Post-translationally, cleaved by autocatalysis into a large and a small subunit and the autocatalytic cleavage is essential to the functional activation of the enzyme.

The protein localises to the membrane. The catalysed reaction is an N-terminal (5-L-glutamyl)-[peptide] + an alpha-amino acid = 5-L-glutamyl amino acid + an N-terminal L-alpha-aminoacyl-[peptide]. It catalyses the reaction glutathione + H2O = L-cysteinylglycine + L-glutamate. The enzyme catalyses an S-substituted glutathione + H2O = an S-substituted L-cysteinylglycine + L-glutamate. The protein operates within sulfur metabolism; glutathione metabolism. Functionally, hydrolyzes and transfers gamma-glutamyl moieties from glutathione and other gamma-glutamyl compounds to acceptors. This Bos taurus (Bovine) protein is Glutathione hydrolase 7.